The following is a 467-amino-acid chain: Uronate isomerase (467 aa).

Belongs to the metallo-dependent hydrolases superfamily. Uronate isomerase family.

The catalysed reaction is D-glucuronate = D-fructuronate. It carries out the reaction aldehydo-D-galacturonate = keto-D-tagaturonate. The protein operates within carbohydrate metabolism; pentose and glucuronate interconversion. In Histophilus somni (strain 2336) (Haemophilus somnus), this protein is Uronate isomerase.